Consider the following 176-residue polypeptide: Large ribosomal subunit protein uL6 (176 aa).

Belongs to the universal ribosomal protein uL6 family. Part of the 50S ribosomal subunit.

In terms of biological role, this protein binds to the 23S rRNA, and is important in its secondary structure. It is located near the subunit interface in the base of the L7/L12 stalk, and near the tRNA binding site of the peptidyltransferase center. This chain is Large ribosomal subunit protein uL6, found in Shewanella sediminis (strain HAW-EB3).